Consider the following 102-residue polypeptide: Small ribosomal subunit protein uS10 (102 aa).

The protein belongs to the universal ribosomal protein uS10 family. In terms of assembly, part of the 30S ribosomal subunit.

Involved in the binding of tRNA to the ribosomes. The protein is Small ribosomal subunit protein uS10 of Citrifermentans bemidjiense (strain ATCC BAA-1014 / DSM 16622 / JCM 12645 / Bem) (Geobacter bemidjiensis).